The sequence spans 50 residues: MPQLVPFYFVNEITFTFIILAITVYILSKYILPRFVRLFLSRTFISKLLG.

The helical transmembrane segment at 13-32 (ITFTFIILAITVYILSKYIL) threads the bilayer.

The protein belongs to the ATPase protein 8 family. F-type ATPases have 2 components, CF(1) - the catalytic core - and CF(0) - the membrane proton channel.

It localises to the mitochondrion membrane. Its function is as follows. Mitochondrial membrane ATP synthase (F(1)F(0) ATP synthase or Complex V) produces ATP from ADP in the presence of a proton gradient across the membrane which is generated by electron transport complexes of the respiratory chain. F-type ATPases consist of two structural domains, F(1) - containing the extramembraneous catalytic core and F(0) - containing the membrane proton channel, linked together by a central stalk and a peripheral stalk. During catalysis, ATP synthesis in the catalytic domain of F(1) is coupled via a rotary mechanism of the central stalk subunits to proton translocation. Part of the complex F(0) domain. Minor subunit located with subunit a in the membrane. The chain is ATP synthase protein 8 (ATP8) from Podospora anserina (strain S / ATCC MYA-4624 / DSM 980 / FGSC 10383) (Pleurage anserina).